Reading from the N-terminus, the 222-residue chain is N-(5'-phosphoribosyl)anthranilate isomerase (222 aa).

This sequence belongs to the TrpF family.

The enzyme catalyses N-(5-phospho-beta-D-ribosyl)anthranilate = 1-(2-carboxyphenylamino)-1-deoxy-D-ribulose 5-phosphate. The protein operates within amino-acid biosynthesis; L-tryptophan biosynthesis; L-tryptophan from chorismate: step 3/5. The chain is N-(5'-phosphoribosyl)anthranilate isomerase from Symbiobacterium thermophilum (strain DSM 24528 / JCM 14929 / IAM 14863 / T).